A 350-amino-acid polypeptide reads, in one-letter code: sn-1 oleoyl-lipid 12-desaturase (350 aa).

A run of 2 helical transmembrane segments spans residues 41-61 and 64-84; these read AWTQ…SLAI and WFLL…FFVI. A Histidine box-1 motif is present at residues 86 to 90; that stretch reads HDCGH. The chain crosses the membrane as a helical span at residues 98 to 118; that stretch reads WVNDLVGHIFMMPLIYPFHSW. The short motif at 122–126 is the Histidine box-2 element; the sequence is HNHHH. 2 consecutive transmembrane segments (helical) span residues 196 to 216 and 219 to 239; these read VAVV…TTGI and FVKF…TFTI. Residues 287 to 291 carry the Histidine box-3 motif; sequence HHLST.

Belongs to the fatty acid desaturase type 2 family. Requires Fe(2+) as cofactor.

Its subcellular location is the membrane. The catalysed reaction is a 1-[(9Z)-octadecenoyl]-2-acyl-glycerolipid + 2 reduced [2Fe-2S]-[ferredoxin] + O2 + 2 H(+) = a 1-[(9Z,12Z)-octadecdienoyl]-2-acyl-glycerolipid + 2 oxidized [2Fe-2S]-[ferredoxin] + 2 H2O. It functions in the pathway lipid metabolism; polyunsaturated fatty acid biosynthesis. In terms of biological role, desaturase involved in fatty acid biosynthesis. Introduces a double bond at carbon 12 of oleoyl groups (18:1) attached to the sn-1 position of the glycerol moiety of membrane glycerolipids. This Anabaena variabilis protein is sn-1 oleoyl-lipid 12-desaturase.